Consider the following 461-residue polypeptide: uncharacterized protein (461 aa).

13 helical membrane-spanning segments follow: residues 13–33 (GIIF…LPFE), 54–74 (ALHV…LGLV), 81–101 (VGFA…ATAL), 120–140 (GNLF…SMWM), 170–190 (VFVL…TLVG), 211–231 (YGLP…YIIF), 256–276 (FIIF…NPFI), 286–306 (IASF…STGV), 314–334 (SNTD…SAVL), 349–369 (FMID…FIIF), 377–397 (TASA…LGMP), 399–419 (IGLA…PVAT), and 439–459 (VGFL…YMFW).

This sequence belongs to the SLC13A/DASS transporter (TC 2.A.47) family. NADC subfamily.

The protein localises to the cell membrane. This is an uncharacterized protein from Haemophilus influenzae (strain ATCC 51907 / DSM 11121 / KW20 / Rd).